The primary structure comprises 94 residues: Large ribosomal subunit protein uL23cz (94 aa).

Belongs to the universal ribosomal protein uL23 family. Part of the 50S ribosomal subunit.

It localises to the plastid. It is found in the chloroplast. In terms of biological role, binds to 23S rRNA. This Agrostis stolonifera (Creeping bentgrass) protein is Large ribosomal subunit protein uL23cz (rpl23-A).